The chain runs to 313 residues: Cilia- and flagella-associated protein 36 (313 aa).

A phosphoserine mark is found at S85 and S147. Positions 147-187 (SDLEQEEMKILKEVLRKSKEEYDQEEERKRKKQLSEAKTEE) form a coiled coil. 2 disordered regions span residues 165–204 (KEEYDQEEERKRKKQLSEAKTEEHPMQANETAKMSNSQGD) and 262–292 (KIKQNQTSEQKGKPAGEVEEMTEKPEMTAEE). A compositionally biased stretch (basic and acidic residues) spans 179–189 (QLSEAKTEEHP). The segment covering 192–203 (ANETAKMSNSQG) has biased composition (polar residues). Phosphoserine is present on S201. Positions 271–292 (QKGKPAGEVEEMTEKPEMTAEE) are enriched in basic and acidic residues.

The protein belongs to the CFAP36 family. Interacts with ARL3.

Its subcellular location is the nucleus. It is found in the cytoplasm. The protein localises to the cell projection. The protein resides in the cilium. It localises to the flagellum. Its function is as follows. May act as an effector for ARL3. The sequence is that of Cilia- and flagella-associated protein 36 from Bos taurus (Bovine).